The sequence spans 498 residues: Membrane-bound lytic murein transglycosylase F (498 aa).

Positions 1-29 are cleaved as a signal peptide; it reads MFFKPDFRPRCAKWLIATGLFLMLGACVE. The segment at 30–267 is non-LT domain; the sequence is KPTTLERVKE…RLKDRYYGHV (238 aa). The interval 268-498 is LT domain; that stretch reads DVLGYVGAYT…SSSSTDESPL (231 aa). Glu314 is a catalytic residue. A disordered region spans residues 464 to 498; it reads VADGNLHVPGVDKTQPPVPPASPVPSSSSTDESPL.

In the N-terminal section; belongs to the bacterial solute-binding protein 3 family. It in the C-terminal section; belongs to the transglycosylase Slt family.

It is found in the cell outer membrane. The catalysed reaction is Exolytic cleavage of the (1-&gt;4)-beta-glycosidic linkage between N-acetylmuramic acid (MurNAc) and N-acetylglucosamine (GlcNAc) residues in peptidoglycan, from either the reducing or the non-reducing ends of the peptidoglycan chains, with concomitant formation of a 1,6-anhydrobond in the MurNAc residue.. Its function is as follows. Murein-degrading enzyme that degrades murein glycan strands and insoluble, high-molecular weight murein sacculi, with the concomitant formation of a 1,6-anhydromuramoyl product. Lytic transglycosylases (LTs) play an integral role in the metabolism of the peptidoglycan (PG) sacculus. Their lytic action creates space within the PG sacculus to allow for its expansion as well as for the insertion of various structures such as secretion systems and flagella. The chain is Membrane-bound lytic murein transglycosylase F from Pseudomonas syringae pv. syringae (strain B728a).